Reading from the N-terminus, the 360-residue chain is Phospho-N-acetylmuramoyl-pentapeptide-transferase (360 aa).

10 helical membrane-spanning segments follow: residues 21 to 41, 74 to 94, 97 to 117, 134 to 154, 168 to 188, 199 to 219, 236 to 256, 263 to 283, 288 to 308, and 338 to 358; these read YVTF…LWWG, MGGI…GDLG, YVWV…IDDY, YILQ…SADM, IMPQ…VGSS, GLAI…AYLS, AGEL…FLWF, VFMG…IAVL, ILLV…ILQV, and VIVR…ATLK.

It belongs to the glycosyltransferase 4 family. MraY subfamily. Mg(2+) serves as cofactor.

It is found in the cell inner membrane. The enzyme catalyses UDP-N-acetyl-alpha-D-muramoyl-L-alanyl-gamma-D-glutamyl-meso-2,6-diaminopimeloyl-D-alanyl-D-alanine + di-trans,octa-cis-undecaprenyl phosphate = di-trans,octa-cis-undecaprenyl diphospho-N-acetyl-alpha-D-muramoyl-L-alanyl-D-glutamyl-meso-2,6-diaminopimeloyl-D-alanyl-D-alanine + UMP. It functions in the pathway cell wall biogenesis; peptidoglycan biosynthesis. Its function is as follows. Catalyzes the initial step of the lipid cycle reactions in the biosynthesis of the cell wall peptidoglycan: transfers peptidoglycan precursor phospho-MurNAc-pentapeptide from UDP-MurNAc-pentapeptide onto the lipid carrier undecaprenyl phosphate, yielding undecaprenyl-pyrophosphoryl-MurNAc-pentapeptide, known as lipid I. The protein is Phospho-N-acetylmuramoyl-pentapeptide-transferase of Shewanella woodyi (strain ATCC 51908 / MS32).